A 785-amino-acid chain; its full sequence is Endonuclease MutS2 (785 aa).

335–342 contacts ATP; sequence GPNTGGKT. One can recognise a Smr domain in the interval 710-785; the sequence is LDLRGERYEN…GSGVTIVELK (76 aa).

It belongs to the DNA mismatch repair MutS family. MutS2 subfamily. Homodimer. Binds to stalled ribosomes, contacting rRNA.

Functionally, endonuclease that is involved in the suppression of homologous recombination and thus may have a key role in the control of bacterial genetic diversity. Acts as a ribosome collision sensor, splitting the ribosome into its 2 subunits. Detects stalled/collided 70S ribosomes which it binds and splits by an ATP-hydrolysis driven conformational change. Acts upstream of the ribosome quality control system (RQC), a ribosome-associated complex that mediates the extraction of incompletely synthesized nascent chains from stalled ribosomes and their subsequent degradation. Probably generates substrates for RQC. This chain is Endonuclease MutS2, found in Bacillus velezensis (strain DSM 23117 / BGSC 10A6 / LMG 26770 / FZB42) (Bacillus amyloliquefaciens subsp. plantarum).